The chain runs to 210 residues: Ribosomal RNA small subunit methyltransferase G (210 aa).

S-adenosyl-L-methionine contacts are provided by residues Gly-77, Phe-82, 100–102 (ERS), 128–129 (VE), and Arg-141.

The protein belongs to the methyltransferase superfamily. RNA methyltransferase RsmG family.

It localises to the cytoplasm. Specifically methylates the N7 position of a guanine in 16S rRNA. The polypeptide is Ribosomal RNA small subunit methyltransferase G (Borrelia recurrentis (strain A1)).